A 76-amino-acid polypeptide reads, in one-letter code: MKALQVAGTLMLLFCLLAAVNATPGQVYINGKCIDCNKPDNDPGIIIPPDHKSAGSMSYTLTSGAIFFGIIYHIFS.

The first 22 residues, 1-22 (MKALQVAGTLMLLFCLLAAVNA), serve as a signal peptide directing secretion. A propeptide spans 23–24 (TP) (removed by a dipeptidylpeptidase). A disulfide bridge links Cys-33 with Cys-36.

This sequence belongs to the bomanin family.

The protein localises to the secreted. Its function is as follows. Secreted immune-induced peptide induced by Toll signaling. Has a role in resistance to bacterial and fungal infections. The strength of antimicrobial activity appears to correlate with the overall level of expression. This chain is Bomanin Tailed 2, found in Drosophila melanogaster (Fruit fly).